The following is a 348-amino-acid chain: EGF-like domain containing protein 1 (348 aa).

The signal sequence occupies residues 1–19; that stretch reads MFYLSTFMTIVISLSLVSC. Residues 60-92 enclose the EGF-like domain; the sequence is TGSDCKVTCQNNGRCYDGNKCLCSSDYTGHLCE. Cystine bridges form between C64–C74, C68–C80, and C82–C91. One can recognise a ZP domain in the interval 99–342; that stretch reads RCTLDGVVFE…PTCAAPAVSQ (244 aa).

In terms of tissue distribution, prismatic layer of shell (at protein level). Expressed primarily in the mantle with highest level in the mantle edge and lower level in the mantle pallium.

It localises to the secreted. The chain is EGF-like domain containing protein 1 from Margaritifera margaritifera (Freshwater pearl mussel).